Reading from the N-terminus, the 375-residue chain is E3 ubiquitin-protein ligase FANCL (375 aa).

Ala-2 carries the N-acetylalanine modification. The tract at residues 104-294 is UBC-RWD region (URD); that stretch reads LPPPPQFYSS…KDVLEIDFPA (191 aa). 8 residues coordinate Zn(2+): Cys-307, Cys-310, Cys-324, Cys-329, His-334, Cys-337, Cys-359, and Cys-362. The RING-type; degenerate zinc finger occupies 307–363; the sequence is CGICYAYQLDGTIPDQVCDNSQCGQPFHQICLYEWLRGLLTSRQSFNIIFGECPYCS.

In terms of assembly, interacts with GGN. Belongs to the multisubunit FA complex composed of FANCA, FANCB, FANCC, FANCE, FANCF, FANCG, FANCL/PHF9 and FANCM. The complex is not found in FA patients. In complex with FANCF, FANCA and FANCG, but not with FANCC, nor FANCE, interacts with HES1; this interaction may be essential for the stability and nuclear localization of FA core complex proteins. Interacts with FANCI. Directly interacts (via the RING-type zinc finger) with UBE2T and UBE2W. Post-translationally, the RING-type zinc finger domain is monoubiquitinated in the presence of UBE2T and UBE2W.

The protein localises to the cytoplasm. The protein resides in the nucleus. It catalyses the reaction S-ubiquitinyl-[E2 ubiquitin-conjugating enzyme]-L-cysteine + [acceptor protein]-L-lysine = [E2 ubiquitin-conjugating enzyme]-L-cysteine + N(6)-ubiquitinyl-[acceptor protein]-L-lysine.. It functions in the pathway protein modification; protein ubiquitination. Its function is as follows. Ubiquitin ligase protein that mediates monoubiquitination of FANCD2 in the presence of UBE2T, a key step in the DNA damage pathway. Also mediates monoubiquitination of FANCI. May stimulate the ubiquitin release from UBE2W. May be required for proper primordial germ cell proliferation in the embryonic stage, whereas it is probably not needed for spermatogonial proliferation after birth. This chain is E3 ubiquitin-protein ligase FANCL (FANCL), found in Homo sapiens (Human).